Here is a 570-residue protein sequence, read N- to C-terminus: Dual specificity testis-specific protein kinase 2 (570 aa).

A Protein kinase domain is found at 58 to 313 (DFTREKIGSG…EIGKTLEEIM (256 aa)). ATP contacts are provided by residues 64 to 72 (IGSGFFSEV) and lysine 87. The active-site Proton acceptor is the aspartate 176. Residue serine 219 is modified to Phosphoserine; by autocatalysis. A phosphoserine mark is found at serine 369, serine 456, and serine 460. A disordered region spans residues 513 to 570 (DCSNPQEENGFVPRPKGTSPCSGAASEEMEVEEERPRRAPVHFSISGISLQTQGEQDG). Residues 558–570 (SGISLQTQGEQDG) show a composition bias toward polar residues.

The protein belongs to the protein kinase superfamily. TKL Ser/Thr protein kinase family. Requires Mg(2+) as cofactor. Mn(2+) serves as cofactor. In terms of tissue distribution, predominantly expressed in testis and prostate. Found predominantly in non-germinal Sertoli cells.

It is found in the nucleus. The catalysed reaction is L-seryl-[protein] + ATP = O-phospho-L-seryl-[protein] + ADP + H(+). The enzyme catalyses L-threonyl-[protein] + ATP = O-phospho-L-threonyl-[protein] + ADP + H(+). It carries out the reaction L-tyrosyl-[protein] + ATP = O-phospho-L-tyrosyl-[protein] + ADP + H(+). Activated by autophosphorylation on Ser-219. Its function is as follows. Dual specificity protein kinase activity catalyzing autophosphorylation and phosphorylation of exogenous substrates on both serine/threonine and tyrosine residues. Phosphorylates cofilin at 'Ser-3'. May play an important role in spermatogenesis. This chain is Dual specificity testis-specific protein kinase 2 (Tesk2), found in Rattus norvegicus (Rat).